We begin with the raw amino-acid sequence, 380 residues long: E3 ubiquitin-protein ligase RNF13 (380 aa).

The signal sequence occupies residues 1–34; the sequence is MLLSIGMLMLSATQVYTILTVQLFAFLNLLPVEA. Residues 35 to 182 are Lumenal-facing; sequence DILAYNFENA…VPELSLPLEY (148 aa). The PA domain maps to 64–160; sequence LKGFLINSKP…GESSANSLKD (97 aa). An N-linked (GlcNAc...) asparagine glycan is attached at Asn88. Residues 183-203 form a helical membrane-spanning segment; it reads YLIPFLIIVGICLILIVIFMI. At 204 to 380 the chain is on the cytoplasmic side; it reads TKFVQDRHRN…EPDYNIANTV (177 aa). The segment at 240 to 282 adopts an RING-type; atypical zinc-finger fold; the sequence is CAICLEEYEDGDKLRILPCSHAYHCKCVDPWLTKTKKTCPVCK. The tract at residues 285–380 is disordered; the sequence is VVPSQGDSDS…EPDYNIANTV (96 aa). Positions 338–356 are enriched in acidic residues; sequence SDYEDDDNEETDSSDADNE.

In terms of assembly, interacts with ERN1. In terms of processing, autoubiquitinated.

Its subcellular location is the endoplasmic reticulum membrane. It localises to the late endosome membrane. It is found in the lysosome membrane. The protein resides in the nucleus inner membrane. The catalysed reaction is S-ubiquitinyl-[E2 ubiquitin-conjugating enzyme]-L-cysteine + [acceptor protein]-L-lysine = [E2 ubiquitin-conjugating enzyme]-L-cysteine + N(6)-ubiquitinyl-[acceptor protein]-L-lysine.. It functions in the pathway protein modification; protein ubiquitination. Functionally, E3 ubiquitin-protein ligase that regulates cell proliferation. Involved in apoptosis regulation. Mediates ER stress-induced activation of JNK signaling pathway and apoptosis by promoting ERN1 activation and splicing of XBP1 mRNA. Also involved in protein trafficking and localization. The sequence is that of E3 ubiquitin-protein ligase RNF13 (Rnf13) from Rattus norvegicus (Rat).